A 387-amino-acid polypeptide reads, in one-letter code: Erythronate-4-phosphate dehydrogenase (387 aa).

2 residues coordinate substrate: S45 and T67. Position 147 (D147) interacts with NAD(+). R208 is an active-site residue. D232 is a binding site for NAD(+). The active site involves E237. The active-site Proton donor is H254. G257 contributes to the NAD(+) binding site. Y258 is a substrate binding site.

It belongs to the D-isomer specific 2-hydroxyacid dehydrogenase family. PdxB subfamily. In terms of assembly, homodimer.

The protein localises to the cytoplasm. The catalysed reaction is 4-phospho-D-erythronate + NAD(+) = (R)-3-hydroxy-2-oxo-4-phosphooxybutanoate + NADH + H(+). Its pathway is cofactor biosynthesis; pyridoxine 5'-phosphate biosynthesis; pyridoxine 5'-phosphate from D-erythrose 4-phosphate: step 2/5. Functionally, catalyzes the oxidation of erythronate-4-phosphate to 3-hydroxy-2-oxo-4-phosphonooxybutanoate. This chain is Erythronate-4-phosphate dehydrogenase, found in Shewanella violacea (strain JCM 10179 / CIP 106290 / LMG 19151 / DSS12).